A 490-amino-acid chain; its full sequence is Betaine aldehyde dehydrogenase (490 aa).

I27 and D93 together coordinate K(+). 150 to 152 (GAW) serves as a coordination point for NAD(+). The active-site Charge relay system is the K162. 176-179 (KPSE) provides a ligand contact to NAD(+). V180 is a K(+) binding site. NAD(+) is bound at residue 230–233 (GTDT). L246 is a binding site for K(+). E252 functions as the Proton acceptor in the catalytic mechanism. NAD(+) is bound by residues G254, C286, and E387. The active-site Nucleophile is C286. C286 bears the Cysteine sulfenic acid (-SOH) mark. K457 and G460 together coordinate K(+). The active-site Charge relay system is the E464.

Belongs to the aldehyde dehydrogenase family. As to quaternary structure, dimer of dimers. K(+) serves as cofactor.

It carries out the reaction betaine aldehyde + NAD(+) + H2O = glycine betaine + NADH + 2 H(+). It functions in the pathway amine and polyamine biosynthesis; betaine biosynthesis via choline pathway; betaine from betaine aldehyde: step 1/1. Involved in the biosynthesis of the osmoprotectant glycine betaine. Catalyzes the irreversible oxidation of betaine aldehyde to the corresponding acid. This is Betaine aldehyde dehydrogenase from Pseudomonas fluorescens (strain ATCC BAA-477 / NRRL B-23932 / Pf-5).